A 364-amino-acid polypeptide reads, in one-letter code: Aminomethyltransferase (364 aa).

This sequence belongs to the GcvT family. The glycine cleavage system is composed of four proteins: P, T, L and H.

It catalyses the reaction N(6)-[(R)-S(8)-aminomethyldihydrolipoyl]-L-lysyl-[protein] + (6S)-5,6,7,8-tetrahydrofolate = N(6)-[(R)-dihydrolipoyl]-L-lysyl-[protein] + (6R)-5,10-methylene-5,6,7,8-tetrahydrofolate + NH4(+). In terms of biological role, the glycine cleavage system catalyzes the degradation of glycine. This chain is Aminomethyltransferase, found in Salmonella paratyphi B (strain ATCC BAA-1250 / SPB7).